The sequence spans 353 residues: Mitochondrial distribution and morphology protein 12 (353 aa).

Residues 1–330 form the SMP-LTD domain; that stretch reads MSFDIKWENL…WPSWICLDMN (330 aa). Composition is skewed to acidic residues over residues 64-75, 84-103, and 330-342; these read DEFYEDTTDSPE, TGDD…DDDG, and NDDD…EENP. Disordered regions lie at residues 64 to 140 and 330 to 353; these read DEFY…NRSR and NDDD…HVGS.

The protein belongs to the MDM12 family. Component of the ER-mitochondria encounter structure (ERMES) or MDM complex, composed of MMM1, MDM10, MDM12 and MDM34. An MMM1 homodimer associates with one molecule of MDM12 on each side in a pairwise head-to-tail manner, and the SMP-LTD domains of MMM1 and MDM12 generate a continuous hydrophobic tunnel for phospholipid trafficking.

Its subcellular location is the mitochondrion outer membrane. The protein localises to the endoplasmic reticulum membrane. Its function is as follows. Component of the ERMES/MDM complex, which serves as a molecular tether to connect the endoplasmic reticulum (ER) and mitochondria. Components of this complex are involved in the control of mitochondrial shape and protein biogenesis, and function in nonvesicular lipid trafficking between the ER and mitochondria. MDM12 is required for the interaction of the ER-resident membrane protein MMM1 and the outer mitochondrial membrane-resident beta-barrel protein MDM10. The MDM12-MMM1 subcomplex functions in the major beta-barrel assembly pathway that is responsible for biogenesis of all mitochondrial outer membrane beta-barrel proteins, and acts in a late step after the SAM complex. The MDM10-MDM12-MMM1 subcomplex further acts in the TOM40-specific pathway after the action of the MDM12-MMM1 complex. Essential for establishing and maintaining the structure of mitochondria and maintenance of mtDNA nucleoids. In Candida tropicalis (strain ATCC MYA-3404 / T1) (Yeast), this protein is Mitochondrial distribution and morphology protein 12.